The primary structure comprises 108 residues: UPF0102 protein Sbal_4100 (108 aa).

The protein belongs to the UPF0102 family.

The protein is UPF0102 protein Sbal_4100 of Shewanella baltica (strain OS155 / ATCC BAA-1091).